The following is a 199-amino-acid chain: Regulator of G-protein signaling 16 (199 aa).

2 S-palmitoyl cysteine lipidation sites follow: Cys-2 and Cys-12. In terms of domain architecture, RGS spans 64–180; that stretch reads SFQSLLNSKN…LKSPAYRDLA (117 aa). Tyr-167 and Tyr-176 each carry phosphotyrosine.

Interacts with GNAI1 and GNAQ. Interacts with GNAI3, GNAI3 and GNAO1. Post-translationally, palmitoylated on Cys-2 and/or Cys-12. Phosphorylated. Phosphorylation at Tyr-167 by EGFR enhances GTPase accelerating (GAP) activity toward GNAI1. In terms of tissue distribution, predominantly found in the retina. Some expression has been found in the liver.

The protein localises to the membrane. Its function is as follows. Regulates G protein-coupled receptor signaling cascades. Inhibits signal transduction by increasing the GTPase activity of G protein alpha subunits, thereby driving them into their inactive GDP-bound form. Plays an important role in the phototransduction cascade by regulating the lifetime and effective concentration of activated transducin alpha. May regulate extra and intracellular mitogenic signals. In Rattus norvegicus (Rat), this protein is Regulator of G-protein signaling 16 (Rgs16).